The sequence spans 228 residues: Heptaprenylglyceryl phosphate synthase (228 aa).

Sn-glycerol 1-phosphate is bound at residue K12. The Mg(2+) site is built by D14 and S40. Sn-glycerol 1-phosphate is bound by residues 159–164 (YLEYSG), G189, and 209–210 (GN).

This sequence belongs to the GGGP/HepGP synthase family. Group I subfamily. Homodimer. Mg(2+) serves as cofactor.

The enzyme catalyses sn-glycerol 1-phosphate + all-trans-heptaprenyl diphosphate = 3-heptaprenyl-sn-glycero-1-phosphate + diphosphate. It functions in the pathway membrane lipid metabolism; glycerophospholipid metabolism. Functionally, prenyltransferase that catalyzes in vivo the transfer of the heptaprenyl moiety of heptaprenyl pyrophosphate (HepPP; 35 carbon atoms) to the C3 hydroxyl of sn-glycerol-1-phosphate (G1P), producing heptaprenylglyceryl phosphate (HepGP). This reaction is an ether-bond-formation step in the biosynthesis of archaea-type G1P-based membrane lipids found in Bacillales. This chain is Heptaprenylglyceryl phosphate synthase, found in Bacillus licheniformis (strain ATCC 14580 / DSM 13 / JCM 2505 / CCUG 7422 / NBRC 12200 / NCIMB 9375 / NCTC 10341 / NRRL NRS-1264 / Gibson 46).